The primary structure comprises 428 residues: Adenylosuccinate synthetase (428 aa).

Residues 12-18 (GDEGKGK) and 40-42 (GHT) each bind GTP. D13 serves as the catalytic Proton acceptor. Residues D13 and G40 each coordinate Mg(2+). Residues 13–16 (DEGK), 38–41 (NAGH), T130, R144, Q225, T240, and R304 contribute to the IMP site. Residue H41 is the Proton donor of the active site. 300–306 (VTTGRAR) provides a ligand contact to substrate. Residues R306, 332 to 334 (KID), and 414 to 416 (SVG) each bind GTP.

The protein belongs to the adenylosuccinate synthetase family. As to quaternary structure, homodimer. The cofactor is Mg(2+).

The protein resides in the cytoplasm. The enzyme catalyses IMP + L-aspartate + GTP = N(6)-(1,2-dicarboxyethyl)-AMP + GDP + phosphate + 2 H(+). It functions in the pathway purine metabolism; AMP biosynthesis via de novo pathway; AMP from IMP: step 1/2. In terms of biological role, plays an important role in the de novo pathway of purine nucleotide biosynthesis. Catalyzes the first committed step in the biosynthesis of AMP from IMP. This Clostridium botulinum (strain ATCC 19397 / Type A) protein is Adenylosuccinate synthetase.